The sequence spans 91 residues: Non-specific lipid-transfer protein 1 (91 aa).

Intrachain disulfides connect cysteine 3–cysteine 50, cysteine 13–cysteine 27, cysteine 28–cysteine 73, and cysteine 48–cysteine 87.

Belongs to the plant LTP family.

Plant non-specific lipid-transfer proteins transfer phospholipids as well as galactolipids across membranes. May play a role in wax or cutin deposition in the cell walls of expanding epidermal cells and certain secretory tissues. In Morus nigra (Black mulberry), this protein is Non-specific lipid-transfer protein 1.